The sequence spans 272 residues: Shikimate dehydrogenase (NADP(+)) (272 aa).

Residues 14–16 (SKS) and threonine 61 each bind shikimate. Lysine 65 serves as the catalytic Proton acceptor. Glutamate 77 contributes to the NADP(+) binding site. Shikimate contacts are provided by asparagine 86 and aspartate 102. Residues 126 to 130 (GAGGA), 149 to 154 (NRTVSR), and methionine 213 contribute to the NADP(+) site. Shikimate is bound at residue tyrosine 215. Glycine 237 is a binding site for NADP(+).

It belongs to the shikimate dehydrogenase family. In terms of assembly, homodimer.

It carries out the reaction shikimate + NADP(+) = 3-dehydroshikimate + NADPH + H(+). It participates in metabolic intermediate biosynthesis; chorismate biosynthesis; chorismate from D-erythrose 4-phosphate and phosphoenolpyruvate: step 4/7. Its function is as follows. Involved in the biosynthesis of the chorismate, which leads to the biosynthesis of aromatic amino acids. Catalyzes the reversible NADPH linked reduction of 3-dehydroshikimate (DHSA) to yield shikimate (SA). This is Shikimate dehydrogenase (NADP(+)) from Escherichia coli O157:H7.